Consider the following 612-residue polypeptide: Siderophore iron transporter 1 (612 aa).

Phosphoserine is present on residues Ser5, Ser21, Ser22, Ser36, and Ser41. The next 14 helical transmembrane spans lie at 91 to 111, 125 to 145, 159 to 179, 188 to 208, 218 to 238, 249 to 269, 299 to 319, 331 to 351, 365 to 385, 406 to 426, 434 to 453, 464 to 484, 495 to 515, and 573 to 593; these read ISFY…SFQA, FAGH…SAAI, LEAF…MAAS, GSVL…IFMA, LVLG…PRVA, WGIA…LAVY, IIGL…ISLA, FIVM…YEIF, EPTI…FYCW, YISY…GILI, WYFV…MIRY, IMPQ…LTVA, AIVT…GSAI, and ILTS…WFVA.

The protein belongs to the major facilitator superfamily.

The protein resides in the membrane. Its function is as follows. Involved in the transport of siderophore iron and so has a role in iron homeostasis. This Schizosaccharomyces pombe (strain 972 / ATCC 24843) (Fission yeast) protein is Siderophore iron transporter 1 (str1).